We begin with the raw amino-acid sequence, 271 residues long: Mannosyl-3-phosphoglycerate phosphatase (271 aa).

Asp-13 (nucleophile) is an active-site residue. Mg(2+) is bound by residues Asp-13, Asp-15, and Asp-214.

It belongs to the HAD-like hydrolase superfamily. MPGP family. Mg(2+) is required as a cofactor.

Its subcellular location is the cytoplasm. It catalyses the reaction 2-O-(alpha-D-mannosyl)-3-phosphoglycerate + H2O = (2R)-2-O-(alpha-D-mannosyl)-glycerate + phosphate. This chain is Mannosyl-3-phosphoglycerate phosphatase, found in Escherichia coli (strain 55989 / EAEC).